The following is an 815-amino-acid chain: (-)-kolavenyl diphosphate synthase TPS10, chloroplastic (815 aa).

Residues 1 to 50 constitute a chloroplast transit peptide; sequence MFMSSSSSSHARRPQLSSFSYLHPPLPFPGLSFSSTRDKRVNFDSTRIIS. Lys247 lines the substrate pocket. Mg(2+) contacts are provided by Asp379 and Asp381. Residues 379–382 carry the DXDD motif motif; the sequence is DIDD. Residue Lys465 participates in substrate binding.

This sequence belongs to the terpene synthase family. Tpsc subfamily. Mg(2+) serves as cofactor.

The protein resides in the plastid. Its subcellular location is the chloroplast. The catalysed reaction is (2E,6E,10E)-geranylgeranyl diphosphate = (-)-kolavenyl diphosphate. With respect to regulation, inhibited by high concentrations of magnesium. Functionally, diterpene synthase that catalyzes the formation of (-)-kolavenyl diphosphate from geranylgeranyl diphosphate (GGPP). The polypeptide is (-)-kolavenyl diphosphate synthase TPS10, chloroplastic (Tripterygium wilfordii (Thunder God vine)).